Here is a 739-residue protein sequence, read N- to C-terminus: Phosphoribosylformylglycinamidine synthase subunit PurL (739 aa).

The active site involves H49. Positions 52 and 91 each coordinate ATP. E93 is a Mg(2+) binding site. Residues S94–H97 and R116 contribute to the substrate site. Residue H95 is the Proton acceptor of the active site. D117 contacts Mg(2+). Q240 provides a ligand contact to substrate. Mg(2+) is bound at residue D268. E312–Q314 is a substrate binding site. ATP-binding residues include D493 and G530. N531 is a Mg(2+) binding site. Position 533 (S533) interacts with substrate.

It belongs to the FGAMS family. In terms of assembly, monomer. Part of the FGAM synthase complex composed of 1 PurL, 1 PurQ and 2 PurS subunits.

It is found in the cytoplasm. The enzyme catalyses N(2)-formyl-N(1)-(5-phospho-beta-D-ribosyl)glycinamide + L-glutamine + ATP + H2O = 2-formamido-N(1)-(5-O-phospho-beta-D-ribosyl)acetamidine + L-glutamate + ADP + phosphate + H(+). The protein operates within purine metabolism; IMP biosynthesis via de novo pathway; 5-amino-1-(5-phospho-D-ribosyl)imidazole from N(2)-formyl-N(1)-(5-phospho-D-ribosyl)glycinamide: step 1/2. Part of the phosphoribosylformylglycinamidine synthase complex involved in the purines biosynthetic pathway. Catalyzes the ATP-dependent conversion of formylglycinamide ribonucleotide (FGAR) and glutamine to yield formylglycinamidine ribonucleotide (FGAM) and glutamate. The FGAM synthase complex is composed of three subunits. PurQ produces an ammonia molecule by converting glutamine to glutamate. PurL transfers the ammonia molecule to FGAR to form FGAM in an ATP-dependent manner. PurS interacts with PurQ and PurL and is thought to assist in the transfer of the ammonia molecule from PurQ to PurL. This Parvibaculum lavamentivorans (strain DS-1 / DSM 13023 / NCIMB 13966) protein is Phosphoribosylformylglycinamidine synthase subunit PurL.